The sequence spans 451 residues: METNQILETIRMIEEEKLDIRTITMGISLLDCMDGDGEVARKKIYQKIVTKARNLVAVGEAIESEFGIPIINKRISVTPIAIIAGSSADTDYVGFAKTLDAAAKEVGVNFIGGYSALVQKGYTKGDEILIRSIPQALAQTERVCSSVNVGSTRTGINMDAVRQMGEVIKETADLTADTQGLGCAKLVVFANAVEDNPFMAGAFHGVGEADCVINVGVSGPGVVKRAIEKVKGEPFDIVAETVKQTAFKITRMGQLVGQVASEKLGVPFGIVDLSLAPTPAIGDSVAHILEEMGLEMVGTHGTTAALALLNDAVKKGGVMACGHVGGLSGAFIPVSEDAGMIEAVQQGALNLEKLEAMTAICSVGLDMIAVPGDTTAETLAAMIADEAAIGVINNKTTAVRVIPASGTKVGDMVEFGGLLGTAPVMPVNGKSSVDFIARGGRIPAPIHSFKN.

This sequence belongs to the UPF0210 family. Homodimer.

In Listeria monocytogenes serotype 4a (strain HCC23), this protein is UPF0210 protein LMHCC_2097.